A 52-amino-acid chain; its full sequence is ATP synthase protein 8 (52 aa).

A helical transmembrane segment spans residues 6 to 26 (PLLWLNLFLMFSATFVMFIVL).

The protein belongs to the ATPase protein 8 family. In terms of assembly, F-type ATPases have 2 components, CF(1) - the catalytic core - and CF(0) - the membrane proton channel.

The protein localises to the mitochondrion membrane. Functionally, mitochondrial membrane ATP synthase (F(1)F(0) ATP synthase or Complex V) produces ATP from ADP in the presence of a proton gradient across the membrane which is generated by electron transport complexes of the respiratory chain. F-type ATPases consist of two structural domains, F(1) - containing the extramembraneous catalytic core and F(0) - containing the membrane proton channel, linked together by a central stalk and a peripheral stalk. During catalysis, ATP synthesis in the catalytic domain of F(1) is coupled via a rotary mechanism of the central stalk subunits to proton translocation. Part of the complex F(0) domain. Minor subunit located with subunit a in the membrane. This is ATP synthase protein 8 (MT-ATP8) from Penaeus monodon (Giant tiger prawn).